A 692-amino-acid polypeptide reads, in one-letter code: Elongation factor G (692 aa).

In terms of domain architecture, tr-type G spans 8 to 282; it reads EKTRNIGIMA…AVVEYMPAPT (275 aa). Residues 17 to 24, 81 to 85, and 135 to 138 each bind GTP; these read AHIDAGKT, DTPGH, and NKMD. A disordered region spans residues 285 to 304; the sequence is PNIKGVHPETGEADERHSSD. A compositionally biased stretch (basic and acidic residues) spans 290–304; the sequence is VHPETGEADERHSSD.

This sequence belongs to the TRAFAC class translation factor GTPase superfamily. Classic translation factor GTPase family. EF-G/EF-2 subfamily.

It localises to the cytoplasm. Its function is as follows. Catalyzes the GTP-dependent ribosomal translocation step during translation elongation. During this step, the ribosome changes from the pre-translocational (PRE) to the post-translocational (POST) state as the newly formed A-site-bound peptidyl-tRNA and P-site-bound deacylated tRNA move to the P and E sites, respectively. Catalyzes the coordinated movement of the two tRNA molecules, the mRNA and conformational changes in the ribosome. This is Elongation factor G from Desulfitobacterium hafniense (strain DSM 10664 / DCB-2).